The sequence spans 843 residues: Toll-like receptor 4 (843 aa).

A signal peptide spans M1–P23. Residues E24 to T54 enclose the LRRNT domain. At E24 to K633 the chain is on the extracellular side. C29 and C40 are disulfide-bonded. A glycan (N-linked (GlcNAc...) asparagine) is linked at N35. LRR repeat units follow at residues S55 to N76, E79 to G100, H103 to G124, S127 to H148, T151 to S172, N176 to V197, N205 to E225, and K227 to I247. Residues N189 and N205 are each glycosylated (N-linked (GlcNAc...) asparagine). 2 N-linked (GlcNAc...) asparagine glycosylation sites follow: N282 and N295. 9 LRR repeats span residues S353–P374, S375–K398, R401–E423, Q424–L445, N449–N459, S473–M496, N498–L519, R522–P543, and S546–P569. Cysteines 391 and 392 form a disulfide. N-linked (GlcNAc...) asparagine glycosylation is found at N498 and N527. N576 is a glycosylation site (N-linked (GlcNAc...) asparagine). Residues N580–I631 form the LRRCT domain. Disulfide bonds link C584/C610 and C586/C629. The N-linked (GlcNAc...) asparagine glycan is linked to N626. The chain crosses the membrane as a helical span at residues T634 to Y654. Residues K655–T843 lie on the Cytoplasmic side of the membrane. The TIR domain maps to S674–L817. Residues S824–T843 form a disordered region. The segment covering A832 to T843 has biased composition (basic and acidic residues).

Belongs to the Toll-like receptor family. In terms of assembly, belongs to the lipopolysaccharide (LPS) receptor, a multi-protein complex containing at least CD14, LY96 and TLR4. Binding to bacterial LPS leads to homodimerization. Interacts with LY96 via the extracellular domain. Interacts with MYD88 and TIRAP via their respective TIR domains. Interacts with NOX4. Interacts with CNPY3 and HSP90B1; this interaction is required for proper folding in the endoplasmic reticulum. Interacts with MAP3K21; this interaction leads to negative regulation of TLR4 signaling. Interacts with CD36, following CD36 stimulation by oxLDL or amyloid-beta 42, and forms a heterodimer with TLR6. The trimeric complex is internalized and triggers inflammatory response. LYN kinase activity facilitates TLR4-TLR6 heterodimerization and signal initiation. Interacts with TICAM1 in response to LPS in a WDFY1-dependent manner. Interacts with WDFY1 in response to LPS. Interacts with SMPDL3B. Interacts with CEACAM1; upon lipopolysaccharide stimulation, forms a complex including TLR4 and the phosphorylated form of SYK and CEACAM1, which in turn, recruits PTPN6 that dephosphorylates SYK, reducing the production of reactive oxygen species (ROS) and lysosome disruption, which in turn, reduces the activity of the inflammasome. Interacts with RFTN1; the interaction occurs in response to lipopolysaccharide stimulation. Interacts with SCIMP; the interaction occurs in response to lipopolysaccharide stimulation and is enhanced by phosphorylation of SCIMP by LYN. This interaction facilitates the phosphorylation of TLR4 by LYN which elicits a selective cytokine response in macrophages. Interacts with TRAF3IP3. Interacts with TREM1; this interaction enhances TLR4-mediated inflammatory response. Interacts with ZG16B/PAUF. Interacts with CD82; this interaction inhibits TLR4-mediated signaling pathway. In terms of processing, phosphorylated on tyrosine residues by LYN after binding lipopolysaccharide. Post-translationally, ubiquitinated by RNF128 via 'Lys-28'-linked polyubiquitin chains, leading to proteasomal degradation.

It localises to the cell membrane. The protein resides in the early endosome. Its subcellular location is the cell projection. The protein localises to the ruffle. Transmembrane receptor that functions as a pattern recognition receptor recognizing pathogen- and damage-associated molecular patterns (PAMPs and DAMPs) to induce innate immune responses via downstream signaling pathways. At the plasma membrane, cooperates with LY96 to mediate the innate immune response to bacterial lipopolysaccharide (LPS). Also involved in LPS-independent inflammatory responses triggered by free fatty acids, such as palmitate, and Ni(2+). Mechanistically, acts via MYD88, TIRAP and TRAF6, leading to NF-kappa-B activation, cytokine secretion and the inflammatory response. Alternatively, CD14-mediated TLR4 internalization via endocytosis is associated with the initiation of a MYD88-independent signaling via the TICAM1-TBK1-IRF3 axis leading to type I interferon production. In addition to the secretion of proinflammatory cytokines, initiates the activation of NLRP3 inflammasome and formation of a positive feedback loop between autophagy and NF-kappa-B signaling cascade. In complex with TLR6, promotes inflammation in monocytes/macrophages by associating with TLR6 and the receptor CD86. Upon ligand binding, such as oxLDL or amyloid-beta 42, the TLR4:TLR6 complex is internalized and triggers inflammatory response, leading to NF-kappa-B-dependent production of CXCL1, CXCL2 and CCL9 cytokines, via MYD88 signaling pathway, and CCL5 cytokine, via TICAM1 signaling pathway. In myeloid dendritic cells, vesicular stomatitis virus glycoprotein G but not LPS promotes the activation of IRF7, leading to type I IFN production in a CD14-dependent manner. The polypeptide is Toll-like receptor 4 (TLR4) (Equus caballus (Horse)).